A 303-amino-acid chain; its full sequence is E3 ubiquitin-protein ligase CCNB1IP1 homolog (303 aa).

An RING-type; degenerate zinc finger spans residues 3–42; that stretch reads CNACWRELEGQAVSTTCGHLLCTEDAKKILSNDAACPICD. Positions 119-184 form a coiled coil; it reads LEEVHTAYQK…YESAKRSAIQ (66 aa). The interval 201–268 is disordered; that stretch reads VPNIMDSSDP…DIRPRQPARP (68 aa).

As to quaternary structure, interacts with ZIP4 and PTD. In terms of tissue distribution, expressed in young panicles.

The protein localises to the nucleus. Its subcellular location is the chromosome. The catalysed reaction is S-ubiquitinyl-[E2 ubiquitin-conjugating enzyme]-L-cysteine + [acceptor protein]-L-lysine = [E2 ubiquitin-conjugating enzyme]-L-cysteine + N(6)-ubiquitinyl-[acceptor protein]-L-lysine.. It participates in protein modification; protein ubiquitination. In terms of biological role, ubiquitin E3 ligase required for class I crossover (CO) formation during meiosis. The chain is E3 ubiquitin-protein ligase CCNB1IP1 homolog from Oryza sativa subsp. japonica (Rice).